We begin with the raw amino-acid sequence, 202 residues long: Transmembrane 4 L6 family member 4 (202 aa).

Over 1 to 9 (MCTGGCARC) the chain is Cytoplasmic. Residues 10-30 (LGGTLIPLAVFAVLANILLFF) form a helical membrane-spanning segment. At 31–48 (PGGKVVDDNSHLSDEVWY) the chain is on the extracellular side. The helical transmembrane segment at 49 to 69 (FGGILGSGVLMIFPALVFLGL) threads the bilayer. Residues 70–93 (QNNDCCGCCGNESCGKRFAMFTST) lie on the Cytoplasmic side of the membrane. The chain crosses the membrane as a helical span at residues 94–114 (LFAVVGFLGAAYSFIVSAVSI). The Extracellular portion of the chain corresponds to 115-158 (NKGPKCFMTNNTWGYPFHDGDYLNDQALWSKCEEPRDVVPWNLT). An N-linked (GlcNAc...) asparagine glycan is attached at Asn156. Residues 159–179 (LFSILLVIGGIQMVLCAIQVI) traverse the membrane as a helical segment. Over 180–202 (NGLLGTLCGDCQCCGCCGGDRPV) the chain is Cytoplasmic.

The protein belongs to the L6 tetraspanin family. In terms of tissue distribution, expressed in liver and testis. Up-regulated in regenerating liver after partial hepatectomy.

The protein resides in the membrane. Its function is as follows. Regulates the adhesive and proliferative status of intestinal epithelial cells. Can mediate density-dependent cell proliferation. The polypeptide is Transmembrane 4 L6 family member 4 (Tm4sf4) (Rattus norvegicus (Rat)).